Here is a 438-residue protein sequence, read N- to C-terminus: Acyl-CoA dehydrogenase apdG (438 aa).

Belongs to the acyl-CoA dehydrogenase family. FAD is required as a cofactor.

It functions in the pathway secondary metabolite biosynthesis. Its function is as follows. Acyl-CoA dehydrogenase; part of the gene cluster that mediates the biosynthesis of aspyridones. The polyketide-amino acid backbone preaspyridone A is first assembled by the PKS-NRPS hybrid apdA. The assembly of preaspyridone A is initiated by loading of malonyl-CoA onto apdA, followed by decarboxylation to yield the acetyl starter unit. The growing polyketide chain then elongates into a tetraketide. The adpA PKS module catalyzes three Claisen condensations, as well as beta-keto processing and methylation. Alpha-methylation step during polyketide synthesis is a prerequisite and a key checkpoint for chain transfer between PKS and NRPS modules. The downstream NRPS module contains the condensation (C), adenylation (A), and thiolation (T) domains and catalyzes the incorporation of tyrosine via the formation of the L-tyrosinyl-thioester and the amide linkage between L-tyrosinyl-thioester and the tetraketide. The bimodular assembly line is terminated with a reductase (R) domain that facilitates formation and release of the tetramic acid product. Because apdA lacks a designated enoylreductase (ER) domain, the required activity is provided the enoyl reductase apdC. ApdC appears to operate with different stereoselectivity in different PKS cycle. Combined with apdC, apdA is proposed to synthesize preaspyridone A via about 20 enzymatic steps. A number of oxidative steps performed successively by the cytochrome P450 monooxygenases apdE and apdB are required for the conversion of preaspyridone A to aspyridone A. The cytochrome P450 monooxygenase apdE is responsible for the oxidative dephenylation of preaspyridone A. Finally, the predicted FAD-dependent monooxygenase apdD and the acyl-CoA dehydrogenase apdG may be involved in the transformation of aspyridone A into aspyridone B. This chain is Acyl-CoA dehydrogenase apdG, found in Emericella nidulans (strain FGSC A4 / ATCC 38163 / CBS 112.46 / NRRL 194 / M139) (Aspergillus nidulans).